The primary structure comprises 324 residues: Phospho-N-acetylmuramoyl-pentapeptide-transferase (324 aa).

9 helical membrane passes run 13–33 (VLSA…IFIP), 57–77 (GTPT…MLII), 85–105 (GMIV…DDIL), 121–141 (MILL…NIGT), 143–163 (IIIP…PLVV), 179–199 (IDGL…IVGF), 201–221 (TGHY…LGFL), 238–260 (LALG…IIIV), and 303–323 (VKLV…GFIA).

Belongs to the glycosyltransferase 4 family. MraY subfamily. The cofactor is Mg(2+).

It localises to the cell membrane. The catalysed reaction is UDP-N-acetyl-alpha-D-muramoyl-L-alanyl-gamma-D-glutamyl-meso-2,6-diaminopimeloyl-D-alanyl-D-alanine + di-trans,octa-cis-undecaprenyl phosphate = di-trans,octa-cis-undecaprenyl diphospho-N-acetyl-alpha-D-muramoyl-L-alanyl-D-glutamyl-meso-2,6-diaminopimeloyl-D-alanyl-D-alanine + UMP. Its pathway is cell wall biogenesis; peptidoglycan biosynthesis. In terms of biological role, catalyzes the initial step of the lipid cycle reactions in the biosynthesis of the cell wall peptidoglycan: transfers peptidoglycan precursor phospho-MurNAc-pentapeptide from UDP-MurNAc-pentapeptide onto the lipid carrier undecaprenyl phosphate, yielding undecaprenyl-pyrophosphoryl-MurNAc-pentapeptide, known as lipid I. The chain is Phospho-N-acetylmuramoyl-pentapeptide-transferase from Clostridium botulinum (strain Eklund 17B / Type B).